Here is a 127-residue protein sequence, read N- to C-terminus: Large ribosomal subunit protein bL12 (127 aa).

Positions 93-127 (LVDEAPNPVSEGVSREEADDLKAQIEDAGGEVELQ) are disordered. The span at 105–117 (VSREEADDLKAQI) shows a compositional bias: basic and acidic residues.

It belongs to the bacterial ribosomal protein bL12 family. As to quaternary structure, homodimer. Part of the ribosomal stalk of the 50S ribosomal subunit. Forms a multimeric L10(L12)X complex, where L10 forms an elongated spine to which 2 to 4 L12 dimers bind in a sequential fashion. Binds GTP-bound translation factors.

Functionally, forms part of the ribosomal stalk which helps the ribosome interact with GTP-bound translation factors. Is thus essential for accurate translation. The polypeptide is Large ribosomal subunit protein bL12 (Salinibacter ruber (strain DSM 13855 / M31)).